The primary structure comprises 503 residues: Probable inactive beta-glucosidase 33 (503 aa).

The first 30 residues, 1 to 30, serve as a signal peptide directing secretion; the sequence is MATGELALVSSLFIVVVFLLLGAVAREASA. A beta-D-glucoside-binding positions include Gln50, His150, and 195 to 196; that span reads NQ. Cys215 and Cys223 form a disulfide bridge. Asn222 carries an N-linked (GlcNAc...) asparagine glycan. 2 residues coordinate a beta-D-glucoside: Tyr339 and Glu399. Residue Glu399 is the Nucleophile of the active site. N-linked (GlcNAc...) asparagine glycosylation occurs at Asn436. A beta-D-glucoside contacts are provided by residues Trp446, 453–454, and Phe462; that span reads EF.

It belongs to the glycosyl hydrolase 1 family.

The sequence is that of Probable inactive beta-glucosidase 33 (BGLU33) from Oryza sativa subsp. japonica (Rice).